We begin with the raw amino-acid sequence, 77 residues long: Conotoxin Lt7.1 (77 aa).

An N-terminal signal peptide occupies residues 1 to 19 (MEKLTILLLVAALLMSTQG). The propeptide occupies 20 to 49 (LIQSGGENRPKEKIKFLSKRKTVAESWWEG). Cystine bridges form between Cys-51-Cys-65, Cys-58-Cys-69, and Cys-64-Cys-74.

This sequence belongs to the conotoxin O2 superfamily. As to expression, expressed by the venom duct.

It localises to the secreted. The polypeptide is Conotoxin Lt7.1 (Conus litteratus (Lettered cone)).